A 208-amino-acid polypeptide reads, in one-letter code: Thymidylate kinase (208 aa).

Residue 10–17 (GPDGSGKT) coordinates ATP.

This sequence belongs to the thymidylate kinase family.

It catalyses the reaction dTMP + ATP = dTDP + ADP. Phosphorylation of dTMP to form dTDP in both de novo and salvage pathways of dTTP synthesis. This Listeria welshimeri serovar 6b (strain ATCC 35897 / DSM 20650 / CCUG 15529 / CIP 8149 / NCTC 11857 / SLCC 5334 / V8) protein is Thymidylate kinase.